The chain runs to 141 residues: Large ribosomal subunit protein uL11 (141 aa).

This sequence belongs to the universal ribosomal protein uL11 family. Part of the ribosomal stalk of the 50S ribosomal subunit. Interacts with L10 and the large rRNA to form the base of the stalk. L10 forms an elongated spine to which L12 dimers bind in a sequential fashion forming a multimeric L10(L12)X complex. One or more lysine residues are methylated.

Functionally, forms part of the ribosomal stalk which helps the ribosome interact with GTP-bound translation factors. The sequence is that of Large ribosomal subunit protein uL11 from Chlamydia abortus (strain DSM 27085 / S26/3) (Chlamydophila abortus).